A 118-amino-acid polypeptide reads, in one-letter code: ATP synthase subunit g, mitochondrial (118 aa).

F-type ATP synthases have 2 components, the catalytic core F(1) and the membrane-embedded component F(0), linked together by a central stalk and a peripheral stalk. The central stalk, also called rotor shaft, is often seen as part of F(1). The peripheral stalk is seen as part of F(0). F(0) contains the membrane channel next to the rotor. F-type ATP synthases form dimers but each monomer functions independently in ATP generation. The dimer consists of 18 different polypeptides: ATP1 (subunit alpha, part of F(1), 3 molecules per monomer), ATP2 (subunit beta, part of F(1), 3 molecules per monomer), ATP3 (subunit gamma, part of the central stalk), ATP4 (subunit b, part of the peripheral stalk), ATP5/OSCP (subunit 5/OSCP, part of the peripheral stalk), ATP6 (subunit a, part of the peripheral stalk), ATP7 (subunit d, part of the peripheral stalk), ATP8 (subunit 8, part of the peripheral stalk), OLI1 (subunit c, part of the rotor, 10 molecules per monomer), ATP14 (subunit h, part of the peripheral stalk), ATP15 (subunit epsilon, part of the central stalk), ATP16 (subunit delta, part of the central stalk), ATP17 (subunit f, part of the peripheral stalk), ATP18 (subunit i/j, part of the peripheral stalk). Dimer-specific subunits are ATP19 (subunit k, at interface between monomers), ATP20 (subunit g, at interface between monomers), TIM11 (subunit e, at interface between monomers). Also contains subunit L.

The protein localises to the mitochondrion inner membrane. Functionally, mitochondrial membrane ATP synthase (F(1)F(0) ATP synthase or Complex V) produces ATP from ADP in the presence of a proton gradient across the membrane which is generated by electron transport complexes of the respiratory chain. F-type ATP synthases consist of two structural domains, F(1) - containing the extramembraneous catalytic core, and F(0) - containing the membrane proton channel, linked together by a central stalk and a peripheral stalk. During catalysis, ATP synthesis in the catalytic domain of F(1) is coupled via a rotary mechanism of the central stalk subunits to proton translocation. Part of the complex F(0) domain Minor subunit located with subunit a/ATP6 in the membrane. Together with subunit e/TIM11, probably contributes to membrane curvature at the site of the ATP synthase dimer, ultimately contributing to formation of cristae. In Pichia angusta (Yeast), this protein is ATP synthase subunit g, mitochondrial.